The sequence spans 193 residues: Large ribosomal subunit protein uL18 (193 aa).

Belongs to the universal ribosomal protein uL18 family. As to quaternary structure, part of the 50S ribosomal subunit. Contacts the 5S and 23S rRNAs.

Functionally, this is one of the proteins that bind and probably mediate the attachment of the 5S RNA into the large ribosomal subunit, where it forms part of the central protuberance. The protein is Large ribosomal subunit protein uL18 of Methanococcus maripaludis (strain C5 / ATCC BAA-1333).